The sequence spans 289 residues: D-alanine aminotransferase (289 aa).

A substrate-binding site is contributed by Y31. R50 contacts pyridoxal 5'-phosphate. Residues R99 and H101 each contribute to the substrate site. K147 acts as the Proton acceptor in catalysis. K147 bears the N6-(pyridoxal phosphate)lysine mark. Residue E179 participates in pyridoxal 5'-phosphate binding.

Belongs to the class-IV pyridoxal-phosphate-dependent aminotransferase family. As to quaternary structure, homodimer. It depends on pyridoxal 5'-phosphate as a cofactor.

The enzyme catalyses D-alanine + 2-oxoglutarate = D-glutamate + pyruvate. Acts on the D-isomers of alanine, leucine, aspartate, glutamate, aminobutyrate, norvaline and asparagine. The enzyme transfers an amino group from a substrate D-amino acid to the pyridoxal phosphate cofactor to form pyridoxamine and an alpha-keto acid in the first half-reaction. The second half-reaction is the reverse of the first, transferring the amino group from the pyridoxamine to a second alpha-keto acid to form the product D-amino acid via a ping-pong mechanism. This is an important process in the formation of D-alanine and D-glutamate, which are essential bacterial cell wall components. The sequence is that of D-alanine aminotransferase (dat) from Listeria innocua serovar 6a (strain ATCC BAA-680 / CLIP 11262).